The chain runs to 101 residues: Small ribosomal subunit protein bS18c (101 aa).

This sequence belongs to the bacterial ribosomal protein bS18 family. Part of the 30S ribosomal subunit.

The protein resides in the plastid. It is found in the chloroplast. This Aethionema grandiflorum (Persian stone-cress) protein is Small ribosomal subunit protein bS18c.